The primary structure comprises 141 residues: Hemoglobin subunit alpha-A/A' (141 aa).

In terms of domain architecture, Globin spans 1–141 (VLSANDKTNV…VGNVLTAKYR (141 aa)). Histidine 58 provides a ligand contact to O2. A heme b-binding site is contributed by histidine 87.

This sequence belongs to the globin family. Heterotetramer of two alpha chains and two beta chains. As to expression, red blood cells.

Functionally, involved in oxygen transport from the lung to the various peripheral tissues. This chain is Hemoglobin subunit alpha-A/A' (HBAA), found in Gyps rueppelli (Rueppell's griffon).